The primary structure comprises 429 residues: Adenylosuccinate synthetase (429 aa).

Residues 12 to 18 (GDEGKGK) and 40 to 42 (GHT) contribute to the GTP site. Catalysis depends on aspartate 13, which acts as the Proton acceptor. 2 residues coordinate Mg(2+): aspartate 13 and glycine 40. Residues 13–16 (DEGK), 38–41 (NAGH), threonine 128, arginine 142, glutamine 223, threonine 238, and arginine 302 contribute to the IMP site. Histidine 41 functions as the Proton donor in the catalytic mechanism. Residue 298–304 (VNTGRKR) participates in substrate binding. GTP is bound by residues arginine 304, 330–332 (KLD), and 412–414 (GVG).

The protein belongs to the adenylosuccinate synthetase family. In terms of assembly, homodimer. Mg(2+) serves as cofactor.

Its subcellular location is the cytoplasm. The catalysed reaction is IMP + L-aspartate + GTP = N(6)-(1,2-dicarboxyethyl)-AMP + GDP + phosphate + 2 H(+). It participates in purine metabolism; AMP biosynthesis via de novo pathway; AMP from IMP: step 1/2. Plays an important role in the de novo pathway of purine nucleotide biosynthesis. Catalyzes the first committed step in the biosynthesis of AMP from IMP. The protein is Adenylosuccinate synthetase of Corynebacterium diphtheriae (strain ATCC 700971 / NCTC 13129 / Biotype gravis).